The following is a 205-amino-acid chain: Probable nicotinate-nucleotide adenylyltransferase (205 aa).

The protein belongs to the NadD family.

The catalysed reaction is nicotinate beta-D-ribonucleotide + ATP + H(+) = deamido-NAD(+) + diphosphate. The protein operates within cofactor biosynthesis; NAD(+) biosynthesis; deamido-NAD(+) from nicotinate D-ribonucleotide: step 1/1. Functionally, catalyzes the reversible adenylation of nicotinate mononucleotide (NaMN) to nicotinic acid adenine dinucleotide (NaAD). The protein is Probable nicotinate-nucleotide adenylyltransferase of Nocardioides sp. (strain ATCC BAA-499 / JS614).